The chain runs to 352 residues: MAAVREPREEAAVGEGEGEEEGRWGGLLPELVEEVVRRVEASGGERWPARKDLVSCACVCRRWREAAAAVVRPLPESGRITFPSSLKQPGPKDFPIQCFVKRNKKKSMFYLYLGLLNGTMDKGKFLMAARRFRRGPHTEYVISLDADDLSQGSNAYVGKLRSDFWGTNFKIYDNQPPYDDAKTSSTRSSQRFGSTHRFGSRRICPQISAGNFNVGQISYKYNLLKSRGPRRMFCTMECPSTQETWENSLKTKSLRCTGTTVLRNKAPRWHEHLQCWCLNFHGRVTVASVKNFQLVATADPSHPDSVGDEETVILQFGKVDSNIFTMDYRQPLSAFQAFAICLSSFGTKLACE.

Over residues 1–11 (MAAVREPREEA) the composition is skewed to basic and acidic residues. Residues 1–23 (MAAVREPREEAAVGEGEGEEEGR) form a disordered region. The F-box domain occupies 22-78 (GRWGGLLPELVEEVVRRVEASGGERWPARKDLVSCACVCRRWREAAAAVVRPLPESG).

This sequence belongs to the TUB family. As to expression, ubiquitous.

The sequence is that of Tubby-like F-box protein 10 (TULP10) from Oryza sativa subsp. japonica (Rice).